The sequence spans 417 residues: Probable medium-chain specific acyl-CoA dehydrogenase 10, mitochondrial (417 aa).

A mitochondrion-targeting transit peptide spans 1-15; sequence MLSRIATSSLGLSRS. FAD is bound by residues 148–157 and 181–183; these read YCVTEPGAGS and WIT. A substrate-binding site is contributed by S157. A substrate-binding site is contributed by 268–271; that stretch reads DMTR. FAD contacts are provided by residues 306–307 and 364–368; these read HQ and QIFGG. E391 serves as the catalytic Proton acceptor. G392 provides a ligand contact to substrate. Residue 393 to 395 coordinates FAD; sequence TSQ.

Belongs to the acyl-CoA dehydrogenase family. As to quaternary structure, homotetramer. FAD serves as cofactor. As to expression, expressed in the epidermis and intestine.

The protein resides in the mitochondrion matrix. It carries out the reaction a medium-chain 2,3-saturated fatty acyl-CoA + oxidized [electron-transfer flavoprotein] + H(+) = a medium-chain (2E)-enoyl-CoA + reduced [electron-transfer flavoprotein]. It participates in lipid metabolism; mitochondrial fatty acid beta-oxidation. In terms of biological role, this enzyme is specific for acyl chain lengths of 4 to 16. The sequence is that of Probable medium-chain specific acyl-CoA dehydrogenase 10, mitochondrial (acdh-10) from Caenorhabditis elegans.